Consider the following 213-residue polypeptide: Uridine kinase (213 aa).

An ATP-binding site is contributed by 13–20; sequence GASASGKS.

This sequence belongs to the uridine kinase family.

The protein resides in the cytoplasm. It catalyses the reaction uridine + ATP = UMP + ADP + H(+). It carries out the reaction cytidine + ATP = CMP + ADP + H(+). Its pathway is pyrimidine metabolism; CTP biosynthesis via salvage pathway; CTP from cytidine: step 1/3. The protein operates within pyrimidine metabolism; UMP biosynthesis via salvage pathway; UMP from uridine: step 1/1. This chain is Uridine kinase, found in Histophilus somni (strain 129Pt) (Haemophilus somnus).